A 380-amino-acid chain; its full sequence is Chorismate synthase (380 aa).

R48 provides a ligand contact to NADP(+). FMN contacts are provided by residues 126-128, G300, 315-319, and R342; these read HFS and KPISS.

It belongs to the chorismate synthase family. As to quaternary structure, homotetramer. It depends on FMNH2 as a cofactor.

It carries out the reaction 5-O-(1-carboxyvinyl)-3-phosphoshikimate = chorismate + phosphate. Its pathway is metabolic intermediate biosynthesis; chorismate biosynthesis; chorismate from D-erythrose 4-phosphate and phosphoenolpyruvate: step 7/7. Catalyzes the anti-1,4-elimination of the C-3 phosphate and the C-6 proR hydrogen from 5-enolpyruvylshikimate-3-phosphate (EPSP) to yield chorismate, which is the branch point compound that serves as the starting substrate for the three terminal pathways of aromatic amino acid biosynthesis. This reaction introduces a second double bond into the aromatic ring system. This Lancefieldella parvula (strain ATCC 33793 / DSM 20469 / CCUG 32760 / JCM 10300 / KCTC 3663 / VPI 0546 / 1246) (Atopobium parvulum) protein is Chorismate synthase.